Consider the following 370-residue polypeptide: 3-hydroxy-3-methylglutaryl-CoA lyase, cytoplasmic (370 aa).

A lipid anchor (N-myristoyl glycine) is attached at glycine 2. The Pyruvate carboxyltransferase domain occupies 78-345; it reads VKIVEVGPRD…NTGVNLYKVM (268 aa). Arginine 86 contacts substrate. 3 residues coordinate a divalent metal cation: aspartate 87, histidine 278, and histidine 280. Cysteine 311 is an active-site residue. A divalent metal cation is bound at residue asparagine 320.

The protein belongs to the HMG-CoA lyase family. A divalent metal cation serves as cofactor.

The protein localises to the cytoplasm. The protein resides in the cytosol. Its subcellular location is the endoplasmic reticulum membrane. The catalysed reaction is (3S)-3-hydroxy-3-methylglutaryl-CoA = acetoacetate + acetyl-CoA. It participates in metabolic intermediate metabolism; (S)-3-hydroxy-3-methylglutaryl-CoA degradation; acetoacetate from (S)-3-hydroxy-3-methylglutaryl-CoA: step 1/1. Non-mitochondrial 3-hydroxy-3-methylglutaryl-CoA lyase that catalyzes a cation-dependent cleavage of (S)-3-hydroxy-3-methylglutaryl-CoA into acetyl-CoA and acetoacetate, a key step in ketogenesis, the products of which support energy production in nonhepatic animal tissues. This is 3-hydroxy-3-methylglutaryl-CoA lyase, cytoplasmic (HMGCLL1) from Homo sapiens (Human).